The sequence spans 363 residues: Inactive CLIP domain-containing serine protease A8 (363 aa).

The first 25 residues, 1 to 25 (MPSWWCCCCLVVLLYAQRMIVPSSA), serve as a signal peptide directing secretion. The 50-residue stretch at 33-82 (LQECPGGFCSPKYLCPNGTYNEANAQNQEIIMLRFGEEDVCQDYMQVCCS) folds into the Clip domain. 3 cysteine pairs are disulfide-bonded: cysteine 36/cysteine 80, cysteine 41/cysteine 73, and cysteine 47/cysteine 81. 4 N-linked (GlcNAc...) asparagine glycosylation sites follow: asparagine 49, asparagine 83, asparagine 117, and asparagine 166. In terms of domain architecture, Peptidase S1 spans 114 to 360 (VEGNRTYAQY…FVTWINATIE (247 aa)). Cystine bridges form between cysteine 245–cysteine 317, cysteine 276–cysteine 297, and cysteine 307–cysteine 336. N-linked (GlcNAc...) asparagine glycosylation is found at asparagine 319 and asparagine 356.

This sequence belongs to the peptidase S1 family. CLIP subfamily. Heterodimer of a light chain and a heavy chain; disulfide-linked. Post-translationally, secreted as a full-length protein. Proteolytically cleaved into two chains which remain covalently linked. Cleavage is induced by Gram-positive or Gram-negative bacteria infection.

It localises to the secreted. Functionally, inactive serine protease which plays an essential role in the innate immune response against bacteria, fungi and protozoa infection by activating the melanization cascade. In the melanization cascade, acts downstream of TEP1 and SPCLIP1 to promote CLIPA28 and CLIPC9 proteolytic cleavage and CLIPC9 recruitment to microbial surfaces. In the resistant strain L3-5, required for the melanization of killed parasite P.berghei ookinetes which results in their clearance. In the susceptible strain G3, appears to be dispensable for ookinete elimination which occurs by lysis. Required for the melanization of Gram-positive and Gram-negative bacteria. During the late stage of fungus B.bassiana-mediated infection, required for the initiation of hyphae melanization by promoting prophenoloxidase PPO activation. The chain is Inactive CLIP domain-containing serine protease A8 from Anopheles gambiae (African malaria mosquito).